The sequence spans 159 residues: Virion assembly protein OPG100 (159 aa).

This sequence belongs to the orthopoxvirus OPG100 family. Homodimer. Part of a complex composed of the kinase OPG054, OPG092, OPG114, OPG115, OPG142 and OPG157. Interacts with OPG175.

It localises to the virion. The protein resides in the host cytoplasm. Functionally, late protein which is a part of a large complex required for early virion morphogenesis. This complex participates in the formation of virosomes and the incorporation of virosomal contents into nascent immature virions. Plays a role in DNA packaging during immature virions (IV) formation. This chain is Virion assembly protein OPG100 (OPG100), found in Homo sapiens (Human).